Here is a 401-residue protein sequence, read N- to C-terminus: Enoyl-[acyl-carrier-protein] reductase [NADH] (401 aa).

Residues Gly-48–Tyr-53, Phe-74–Glu-75, Asp-111–Ala-112, and Leu-140–Ala-141 contribute to the NAD(+) site. A substrate-binding site is contributed by Tyr-226. The Proton donor role is filled by Tyr-236. NAD(+) contacts are provided by residues Lys-245 and Val-274 to Thr-276.

This sequence belongs to the TER reductase family. Monomer.

The catalysed reaction is a 2,3-saturated acyl-[ACP] + NAD(+) = a (2E)-enoyl-[ACP] + NADH + H(+). The protein operates within lipid metabolism; fatty acid biosynthesis. Functionally, involved in the final reduction of the elongation cycle of fatty acid synthesis (FAS II). Catalyzes the reduction of a carbon-carbon double bond in an enoyl moiety that is covalently linked to an acyl carrier protein (ACP). This is Enoyl-[acyl-carrier-protein] reductase [NADH] from Xylella fastidiosa (strain 9a5c).